The primary structure comprises 398 residues: MVILSHHKRSPPLLMRLFRICRFFRRLMSSSTSSVESVEDESCSNECSASFTFDTNNNSRGNNQVNELAEETHMKLSITPTRESFSLSQLERIITIGKGTFGRVELARDKITGAHYALKVLNIRRVVDMRQTQHVHNEKRVLLQLKHPFIVKMYASEKDSNHLYMIMEFVPGGEMFSYLRASRSFSNSMARFYASEIVCALEYIHSLGIVYRDLKPENLMLSKEGHIKMADFGFAKELRDRTYTICGTPDYLAPESLARTGHNKGVDWWALGILIYEMMVGKPPFRGKTTSEIYDAIIEHKLKFPRSFNLAAKDLVKKLLEVDRTQRIGCMKNGTQDVKDHKWFEKVNWDDTLHLRVEPPIVPTLYHPGDTGNFDDYEEDTTGGPLCSQRDRDLFAEW.

The Protein kinase domain maps to 90–344 (LERIITIGKG…TQDVKDHKWF (255 aa)). ATP contacts are provided by residues 96 to 104 (IGKGTFGRV) and Lys-119. Asp-213 (proton acceptor) is an active-site residue. The AGC-kinase C-terminal domain occupies 345–398 (EKVNWDDTLHLRVEPPIVPTLYHPGDTGNFDDYEEDTTGGPLCSQRDRDLFAEW).

This sequence belongs to the protein kinase superfamily. Ser/Thr protein kinase family. cAMP subfamily.

The enzyme catalyses L-seryl-[protein] + ATP = O-phospho-L-seryl-[protein] + ADP + H(+). It catalyses the reaction L-threonyl-[protein] + ATP = O-phospho-L-threonyl-[protein] + ADP + H(+). In Caenorhabditis elegans, this protein is cAMP-dependent protein kinase, catalytic subunit-like.